Reading from the N-terminus, the 398-residue chain is MFELVDNVPQSPVIKVIGVGGGGGNAVNHMVKSSIEGVEFICANTDAQALKNIGARTILQLGTGVTKGLGAGANPEVGRQAALEDRERIAEVLQGTNMVFITTGMGGGTGTGAAPIIAEVAKEMGILTVAVVTRPFPFEGRKRMQIADEGIRMLAESVDSLITIPNEKLLTILGKDASLLSAFAKADDVLAGAVRGISDIIKRPGMINVDFADVRTVMGEMGMAMMGTGCASGPNRAREATEAAIRNPLLEDVNLQGARGILVNITAGPDLSLGEYSDVGSIIEAFASDHAMVKVGTVIDPDMRDELHVTVVATGLGARIEKPVKVVDNTLQTAQQAYEASNPAPVRQEQPAVNYRDLERPTVMRNQAHAGAAAAAKLNPQDDLDYLDIPAFLRRQAD.

GTP-binding positions include 21–25 (GGGGN), 108–110 (GTG), Glu139, Arg143, and Asp187.

This sequence belongs to the FtsZ family. Homodimer. Polymerizes to form a dynamic ring structure in a strictly GTP-dependent manner. Interacts directly with several other division proteins.

The protein resides in the cytoplasm. Its function is as follows. Essential cell division protein that forms a contractile ring structure (Z ring) at the future cell division site. The regulation of the ring assembly controls the timing and the location of cell division. One of the functions of the FtsZ ring is to recruit other cell division proteins to the septum to produce a new cell wall between the dividing cells. Binds GTP and shows GTPase activity. This chain is Cell division protein FtsZ, found in Pseudomonas putida (strain ATCC 47054 / DSM 6125 / CFBP 8728 / NCIMB 11950 / KT2440).